Here is a 430-residue protein sequence, read N- to C-terminus: Small ribosomal subunit protein uS3m (430 aa).

It belongs to the universal ribosomal protein uS3 family.

Its subcellular location is the mitochondrion. The chain is Small ribosomal subunit protein uS3m (RPS3) from Marchantia polymorpha (Common liverwort).